We begin with the raw amino-acid sequence, 440 residues long: VGFKAGVKDYRLTYYTPEYKTKDTDILAAFRMTPQPGVPAEEAGAAVAAESSTGTWTTVWTDGLTSLDRYKGRCYDIEPVAGEENQYIAYVAYPLDLFEEGSVTNLFTSIVGNVFGFKALRALRLEDLRIPPAYSKTFIGPPHGIQVERDKLNKYGRPLLGCTIKPKLGLSAKNYGRAVYECLRGGLDFTKDDENVNSQPFMRWRDRFLFVAEALFKSQAETGEIKGHYLNATAGTCEEMLKRAVFARELGAPIVMHDYLTGGFTANTSLAFYCRDNGLLLHIHRAMHAVIDRQRNHGIHFRVLAKALRMSGGDHIHAGTVVGKLEGEREVTLGFVDLLRDDYIEKDRSRGIYFTQDWVSMPGVLPVASGGIHVWHMPALTEIFGDDSVLQFGGGTLGHPWGNAPGAVANRVALEACVQARNEGRDLAREGNTIIREASK.

An N6,N6,N6-trimethyllysine modification is found at lysine 4. Substrate contacts are provided by asparagine 113 and threonine 163. Lysine 165 serves as the catalytic Proton acceptor. Position 167 (lysine 167) interacts with substrate. Residues lysine 191, aspartate 193, and glutamate 194 each contribute to the Mg(2+) site. Lysine 191 is modified (N6-carboxylysine). Histidine 284 acts as the Proton acceptor in catalysis. 3 residues coordinate substrate: arginine 285, histidine 317, and serine 369.

Belongs to the RuBisCO large chain family. Type I subfamily. As to quaternary structure, heterohexadecamer of 8 large chains and 8 small chains; disulfide-linked. The disulfide link is formed within the large subunit homodimers. Requires Mg(2+) as cofactor. The disulfide bond which can form in the large chain dimeric partners within the hexadecamer appears to be associated with oxidative stress and protein turnover.

Its subcellular location is the plastid. It localises to the chloroplast. The catalysed reaction is 2 (2R)-3-phosphoglycerate + 2 H(+) = D-ribulose 1,5-bisphosphate + CO2 + H2O. The enzyme catalyses D-ribulose 1,5-bisphosphate + O2 = 2-phosphoglycolate + (2R)-3-phosphoglycerate + 2 H(+). RuBisCO catalyzes two reactions: the carboxylation of D-ribulose 1,5-bisphosphate, the primary event in carbon dioxide fixation, as well as the oxidative fragmentation of the pentose substrate in the photorespiration process. Both reactions occur simultaneously and in competition at the same active site. The chain is Ribulose bisphosphate carboxylase large chain from Matteuccia struthiopteris (European ostrich fern).